We begin with the raw amino-acid sequence, 307 residues long: MSDERIRQIAFYGKGGIGKSTTSQNTLAAMAEMGKRILIVGCDPKADSTRLILHCKAQTTVLHLAAEKGAVEDLELEEVVINGFRNIRCVESGGPEPGVGCAGRGIITAINFLEENGAYQDLDFVSYDVLGDVVCGGFAMPIREGKAQEIYIVTSGEMMAMFAANNISRGILKYAHSGGVRLGGLICNSRKTDREWDLISELARRISTQMIHFVPRDNIVQHAELRRMTVNEYAPDSNQANEYRTLATKIIDNEFMAVPTPLEMDELEELLIEFGILESDEQVKQLTETDKAAKESEKKQEDAEGEA.

13 to 20 lines the ATP pocket; the sequence is GKGGIGKS. C101 serves as a coordination point for [4Fe-4S] cluster. R104 bears the ADP-ribosylarginine; by dinitrogenase reductase ADP-ribosyltransferase mark. C135 serves as a coordination point for [4Fe-4S] cluster. The interval 285 to 307 is disordered; that stretch reads QLTETDKAAKESEKKQEDAEGEA.

The protein belongs to the NifH/BchL/ChlL family. As to quaternary structure, homodimer. [4Fe-4S] cluster serves as cofactor. Post-translationally, the reversible ADP-ribosylation of Arg-104 inactivates the nitrogenase reductase and regulates nitrogenase activity.

It carries out the reaction N2 + 8 reduced [2Fe-2S]-[ferredoxin] + 16 ATP + 16 H2O = H2 + 8 oxidized [2Fe-2S]-[ferredoxin] + 2 NH4(+) + 16 ADP + 16 phosphate + 6 H(+). In terms of biological role, the key enzymatic reactions in nitrogen fixation are catalyzed by the nitrogenase complex, which has 2 components: the iron protein and the molybdenum-iron protein. This is Nitrogenase iron protein 2 (nifH2) from Mastigocladus laminosus (Fischerella sp.).